The primary structure comprises 52 residues: Large ribosomal subunit protein bL33 (52 aa).

It belongs to the bacterial ribosomal protein bL33 family.

This chain is Large ribosomal subunit protein bL33 (rpmG), found in Chlamydia pneumoniae (Chlamydophila pneumoniae).